A 158-amino-acid chain; its full sequence is NAD(P)H-quinone oxidoreductase subunit N (158 aa).

This sequence belongs to the complex I NdhN subunit family. NDH-1 can be composed of about 15 different subunits; different subcomplexes with different compositions have been identified which probably have different functions.

Its subcellular location is the cellular thylakoid membrane. It catalyses the reaction a plastoquinone + NADH + (n+1) H(+)(in) = a plastoquinol + NAD(+) + n H(+)(out). The enzyme catalyses a plastoquinone + NADPH + (n+1) H(+)(in) = a plastoquinol + NADP(+) + n H(+)(out). NDH-1 shuttles electrons from an unknown electron donor, via FMN and iron-sulfur (Fe-S) centers, to quinones in the respiratory and/or the photosynthetic chain. The immediate electron acceptor for the enzyme in this species is believed to be plastoquinone. Couples the redox reaction to proton translocation, and thus conserves the redox energy in a proton gradient. Cyanobacterial NDH-1 also plays a role in inorganic carbon-concentration. This chain is NAD(P)H-quinone oxidoreductase subunit N, found in Crocosphaera subtropica (strain ATCC 51142 / BH68) (Cyanothece sp. (strain ATCC 51142)).